A 203-amino-acid polypeptide reads, in one-letter code: Protein GrpE (203 aa).

Basic and acidic residues predominate over residues 1–10 (MSNESIKAEQ). A disordered region spans residues 1–20 (MSNESIKAEQDLIQEGVESE).

It belongs to the GrpE family. In terms of assembly, homodimer.

The protein resides in the cytoplasm. Functionally, participates actively in the response to hyperosmotic and heat shock by preventing the aggregation of stress-denatured proteins, in association with DnaK and GrpE. It is the nucleotide exchange factor for DnaK and may function as a thermosensor. Unfolded proteins bind initially to DnaJ; upon interaction with the DnaJ-bound protein, DnaK hydrolyzes its bound ATP, resulting in the formation of a stable complex. GrpE releases ADP from DnaK; ATP binding to DnaK triggers the release of the substrate protein, thus completing the reaction cycle. Several rounds of ATP-dependent interactions between DnaJ, DnaK and GrpE are required for fully efficient folding. The protein is Protein GrpE of Shewanella sp. (strain MR-4).